A 286-amino-acid chain; its full sequence is NAD kinase (286 aa).

Asp68 functions as the Proton acceptor in the catalytic mechanism. NAD(+)-binding positions include 68–69 (DG), Lys73, 142–143 (ND), Arg153, Asp172, 183–188 (TGYSFS), and Gln242.

This sequence belongs to the NAD kinase family. Requires a divalent metal cation as cofactor.

Its subcellular location is the cytoplasm. It carries out the reaction NAD(+) + ATP = ADP + NADP(+) + H(+). Its function is as follows. Involved in the regulation of the intracellular balance of NAD and NADP, and is a key enzyme in the biosynthesis of NADP. Catalyzes specifically the phosphorylation on 2'-hydroxyl of the adenosine moiety of NAD to yield NADP. In Natranaerobius thermophilus (strain ATCC BAA-1301 / DSM 18059 / JW/NM-WN-LF), this protein is NAD kinase.